A 124-amino-acid polypeptide reads, in one-letter code: Alpha-amylase inhibitor 0.53 (124 aa).

Disulfide bonds link Cys-20–Cys-41, Cys-28–Cys-83, Cys-42–Cys-99, and Cys-54–Cys-115.

The protein belongs to the protease inhibitor I6 (cereal trypsin/alpha-amylase inhibitor) family. In terms of assembly, homodimer. Post-translationally, the disulfide bonds are essential for the inhibitor activity. In terms of tissue distribution, endosperm.

Its subcellular location is the secreted. Alpha-amylase inhibitor. This chain is Alpha-amylase inhibitor 0.53, found in Triticum aestivum (Wheat).